The sequence spans 103 residues: Large ribosomal subunit protein bL21 (103 aa).

The protein belongs to the bacterial ribosomal protein bL21 family. Part of the 50S ribosomal subunit. Contacts protein L20.

Its function is as follows. This protein binds to 23S rRNA in the presence of protein L20. In Delftia acidovorans (strain DSM 14801 / SPH-1), this protein is Large ribosomal subunit protein bL21.